Consider the following 414-residue polypeptide: Serine hydroxymethyltransferase (414 aa).

(6S)-5,6,7,8-tetrahydrofolate-binding positions include Leu-117 and Gly-121 to Leu-123. Position 226 is an N6-(pyridoxal phosphate)lysine (Lys-226). Ser-349–Phe-351 serves as a coordination point for (6S)-5,6,7,8-tetrahydrofolate.

Belongs to the SHMT family. As to quaternary structure, homodimer. It depends on pyridoxal 5'-phosphate as a cofactor.

Its subcellular location is the cytoplasm. The enzyme catalyses (6R)-5,10-methylene-5,6,7,8-tetrahydrofolate + glycine + H2O = (6S)-5,6,7,8-tetrahydrofolate + L-serine. Its pathway is one-carbon metabolism; tetrahydrofolate interconversion. It functions in the pathway amino-acid biosynthesis; glycine biosynthesis; glycine from L-serine: step 1/1. Functionally, catalyzes the reversible interconversion of serine and glycine with tetrahydrofolate (THF) serving as the one-carbon carrier. Also exhibits THF-independent aldolase activity toward beta-hydroxyamino acids, producing glycine and aldehydes, via a retro-aldol mechanism. In Methanospirillum hungatei JF-1 (strain ATCC 27890 / DSM 864 / NBRC 100397 / JF-1), this protein is Serine hydroxymethyltransferase.